The chain runs to 209 residues: A-type ATP synthase subunit D (209 aa).

The protein belongs to the V-ATPase D subunit family. In terms of assembly, has multiple subunits with at least A(3), B(3), C, D, E, F, H, I and proteolipid K(x).

It localises to the cell membrane. Functionally, component of the A-type ATP synthase that produces ATP from ADP in the presence of a proton gradient across the membrane. In Methanosarcina acetivorans (strain ATCC 35395 / DSM 2834 / JCM 12185 / C2A), this protein is A-type ATP synthase subunit D.